Consider the following 173-residue polypeptide: Non-classical export protein 2 (173 aa).

The Cytoplasmic portion of the chain corresponds to 1-10; that stretch reads MLALADNILR. The helical transmembrane segment at 11 to 30 threads the bilayer; the sequence is IINFLFLVISIGLISSLLNT. Residues 31–37 are Extracellular-facing; that stretch reads QHRHSSR. The helical transmembrane segment at 38 to 62 threads the bilayer; the sequence is VNYCMFACAYGIFTDSLYGVFANFI. Over 63–75 the chain is Cytoplasmic; the sequence is EPLAWPLVLFTLD. A helical membrane pass occupies residues 76 to 93; the sequence is FLNFVFTFTAGTVLAVGI. Over 94 to 137 the chain is Extracellular; it reads RAHSCNNSSYVDSNKITQGSGTRCRQAQAAVAFLYFSCAIFLAK. A helical membrane pass occupies residues 138 to 157; the sequence is TLMSVFNMISNGAFGSGSFS. Over 158 to 173 the chain is Cytoplasmic; sequence KRRRTGQVGVPTISQV.

It belongs to the NCE102 family.

The protein localises to the cell membrane. Involved in membrane organization. Required for the formation of membrane compartments of CAN1 (MCCs), localization of CAN1 at the MCCs and subsequent invagination of the plasma membrane at the MCCs sites. Involved in eisosome organization and might act as a sensor of sphingolipids that regulates plasma membrane function. Involved in a novel pathway of export of proteins that lack a cleavable signal sequence. It may be an accessory subunit to an essential core component of the non-classical export machinery. Non-classical export pathway also functions as an alternative clearance/detoxification pathway to eliminate damaged material, when the basic repair pathway is not sufficient. The protein is Non-classical export protein 2 (NCE102) of Saccharomyces cerevisiae (strain ATCC 204508 / S288c) (Baker's yeast).